A 122-amino-acid chain; its full sequence is Large ribosomal subunit protein uL14 (122 aa).

Belongs to the universal ribosomal protein uL14 family. In terms of assembly, part of the 50S ribosomal subunit. Forms a cluster with proteins L3 and L19. In the 70S ribosome, L14 and L19 interact and together make contacts with the 16S rRNA in bridges B5 and B8.

Its function is as follows. Binds to 23S rRNA. Forms part of two intersubunit bridges in the 70S ribosome. This Nitrosococcus oceani (strain ATCC 19707 / BCRC 17464 / JCM 30415 / NCIMB 11848 / C-107) protein is Large ribosomal subunit protein uL14.